The following is a 912-amino-acid chain: Intercellular adhesion molecule 5 (912 aa).

An N-terminal signal peptide occupies residues 1–29; sequence MPGPSPGLRALLGFWVALGLGILRLSAVA. The Extracellular portion of the chain corresponds to 30 to 826; the sequence is QEPFWADLQP…RITVRVAGPW (797 aa). Ig-like C2-type domains are found at residues 47–127, 132–232, 239–324, 332–395, 403–481, 486–561, 566–645, 659–734, and 738–819; these read GGSL…PLPP, GENF…RLLA, DSQS…LLTL, GKLV…NGSA, PRLD…VTLT, PALD…VAVT, PSFE…NPLG, PQMD…TVGV, and PVVA…RRIT. N-linked (GlcNAc...) (high mannose) asparagine glycosylation occurs at Asn53. Disulfide bonds link Cys54/Cys97 and Cys58/Cys101. N-linked (GlcNAc...) asparagine glycosylation is present at Asn134. An intrachain disulfide couples Cys139 to Cys195. A phosphothreonine mark is found at Thr179 and Thr181. 2 N-linked (GlcNAc...) asparagine glycosylation sites follow: Asn192 and Asn211. Residues Cys246 and Cys297 are joined by a disulfide bond. 3 N-linked (GlcNAc...) asparagine glycosylation sites follow: Asn311, Asn366, and Asn392. Cys339 and Cys378 are joined by a disulfide. Cystine bridges form between Cys410–Cys465, Cys493–Cys546, and Cys573–Cys638. Residues Asn576 and Asn639 are each glycosylated (N-linked (GlcNAc...) asparagine). A disulfide bond links Cys666 and Cys717. The disordered stretch occupies residues 678 to 708; the sequence is AAGPACARGRPSPRVRCSREGAPRPARPRVS. N-linked (GlcNAc...) asparagine glycosylation is found at Asn756, Asn787, and Asn788. A disulfide bridge connects residues Cys761 and Cys806. Residues 827–847 traverse the membrane as a helical segment; sequence LWIAVGGAVGGAVLLAAGAGL. At 848–912 the chain is on the cytoplasmic side; sequence AFYVQSTACK…EVFAIQLTSA (65 aa). Residues 880 to 902 are disordered; that stretch reads GGAGSGAEGGPEAEDSAESPAGG.

This sequence belongs to the immunoglobulin superfamily. ICAM family. Post-translationally, glycosylation at Asn-53 is critical for functional folding. As to expression, expressed on neurons in the most rostral segment of the mammalian brain, the telencephalon.

The protein localises to the membrane. Functionally, ICAM proteins are ligands for the leukocyte adhesion protein LFA-1 (integrin alpha-L/beta-2). The polypeptide is Intercellular adhesion molecule 5 (ICAM5) (Oryctolagus cuniculus (Rabbit)).